A 124-amino-acid polypeptide reads, in one-letter code: SLLQFETLIMKVAKKSGMVWYSNYGCYCGWGGQGRPQDATDRCCFVHDCCYGKVTGCDPKMDVYSFSEENGDIVCGGDDPCKKEICECDRAAAICFRDNLNTYNDKKYWAFGAKNCPQEESEPC.

Disulfide bonds link Cys26–Cys116, Cys28–Cys44, Cys43–Cys95, Cys49–Cys124, Cys50–Cys88, Cys57–Cys81, and Cys75–Cys86. Positions 27, 29, and 31 each coordinate Ca(2+). Residue His47 is part of the active site. Position 48 (Asp48) interacts with Ca(2+). The active site involves Asp89.

It belongs to the phospholipase A2 family. Group II subfamily. D49 sub-subfamily. Ca(2+) serves as cofactor. As to expression, expressed by the venom gland.

It localises to the secreted. It carries out the reaction a 1,2-diacyl-sn-glycero-3-phosphocholine + H2O = a 1-acyl-sn-glycero-3-phosphocholine + a fatty acid + H(+). PLA2 catalyzes the calcium-dependent hydrolysis of the 2-acyl groups in 3-sn-phosphoglycerides. The chain is Acidic phospholipase A2 A from Gloydius halys (Chinese water mocassin).